A 217-amino-acid chain; its full sequence is Chorionic somatomammotropin hormone 2 (217 aa).

An N-terminal signal peptide occupies residues 1-26 (MAAGSRTSLLLAFALLCLPWLQEAGA). Histidine 44 serves as a coordination point for Zn(2+). Residues cysteine 79 and cysteine 191 are joined by a disulfide bond. Zn(2+) is bound at residue glutamate 200. An intrachain disulfide couples cysteine 208 to cysteine 215.

This sequence belongs to the somatotropin/prolactin family. As to quaternary structure, can be found in a monomeric as well as dimeric form.

It localises to the secreted. Functionally, produced only during pregnancy and is involved in stimulating lactation, fetal growth and metabolism. Does not interact with GHR but only activates PRLR through zinc-induced dimerization. This Homo sapiens (Human) protein is Chorionic somatomammotropin hormone 2 (CSH2).